We begin with the raw amino-acid sequence, 157 residues long: Ribosomal RNA large subunit methyltransferase H (157 aa).

Residues Leu73, Gly104, and 121 to 126 (LSPLTL) contribute to the S-adenosyl-L-methionine site.

Belongs to the RNA methyltransferase RlmH family. As to quaternary structure, homodimer.

The protein localises to the cytoplasm. The catalysed reaction is pseudouridine(1915) in 23S rRNA + S-adenosyl-L-methionine = N(3)-methylpseudouridine(1915) in 23S rRNA + S-adenosyl-L-homocysteine + H(+). Its function is as follows. Specifically methylates the pseudouridine at position 1915 (m3Psi1915) in 23S rRNA. The polypeptide is Ribosomal RNA large subunit methyltransferase H (Acidithiobacillus ferrooxidans (strain ATCC 23270 / DSM 14882 / CIP 104768 / NCIMB 8455) (Ferrobacillus ferrooxidans (strain ATCC 23270))).